A 205-amino-acid polypeptide reads, in one-letter code: MKLGIDENYFELEENLLKEGYRFICGVDEAGRGPLAGPVFAAAVIMDREIIIEGVRDSKKLTPKKREKLFEEIVKESITYSVAMVDNKTIDEININNATFLAMKNAIEALELVPDIVLVDGYEIPDLNLPQKALIKGDRKSYSIACASILAKVSRDRFITQISSLYPVYKFEKHKGYGTKEHIRLILEYGPCEIHRKSFLKNILR.

The 184-residue stretch at 22-205 folds into the RNase H type-2 domain; the sequence is RFICGVDEAG…RKSFLKNILR (184 aa). A divalent metal cation contacts are provided by D28, E29, and D120.

Belongs to the RNase HII family. It depends on Mn(2+) as a cofactor. Mg(2+) is required as a cofactor.

The protein resides in the cytoplasm. The enzyme catalyses Endonucleolytic cleavage to 5'-phosphomonoester.. Endonuclease that specifically degrades the RNA of RNA-DNA hybrids. The polypeptide is Ribonuclease HII (Caldicellulosiruptor saccharolyticus (strain ATCC 43494 / DSM 8903 / Tp8T 6331)).